Consider the following 277-residue polypeptide: Undecaprenyl-diphosphatase (277 aa).

7 consecutive transmembrane segments (helical) span residues 5–25 (WTAAQALILGVVEGLTEFLPI), 44–64 (RAMAFNIIIQLGAILAVVWEF), 86–106 (LNLLIAFMPAVVLGVIFADTI), 110–130 (LFNAITVATALVVGGVIMLWA), 184–204 (AATEFSFFLAMPTMVGAAVYS), 219–239 (VFAIGFITSFIFAMIAVRALL), and 255–275 (IAFGLLILATWQFGWIDWASA).

Belongs to the UppP family.

The protein localises to the cell inner membrane. It carries out the reaction di-trans,octa-cis-undecaprenyl diphosphate + H2O = di-trans,octa-cis-undecaprenyl phosphate + phosphate + H(+). Functionally, catalyzes the dephosphorylation of undecaprenyl diphosphate (UPP). Confers resistance to bacitracin. The sequence is that of Undecaprenyl-diphosphatase from Pseudomonas savastanoi pv. phaseolicola (strain 1448A / Race 6) (Pseudomonas syringae pv. phaseolicola (strain 1448A / Race 6)).